Consider the following 337-residue polypeptide: tRNA N6-adenosine threonylcarbamoyltransferase (337 aa).

Fe cation is bound by residues His-111 and His-115. Substrate is bound by residues 134–138 (LVSGG), Asp-167, Gly-180, and Asn-272. Position 300 (Asp-300) interacts with Fe cation.

This sequence belongs to the KAE1 / TsaD family. Fe(2+) serves as cofactor.

The protein localises to the cytoplasm. The enzyme catalyses L-threonylcarbamoyladenylate + adenosine(37) in tRNA = N(6)-L-threonylcarbamoyladenosine(37) in tRNA + AMP + H(+). Required for the formation of a threonylcarbamoyl group on adenosine at position 37 (t(6)A37) in tRNAs that read codons beginning with adenine. Is involved in the transfer of the threonylcarbamoyl moiety of threonylcarbamoyl-AMP (TC-AMP) to the N6 group of A37, together with TsaE and TsaB. TsaD likely plays a direct catalytic role in this reaction. The chain is tRNA N6-adenosine threonylcarbamoyltransferase from Salmonella typhi.